The sequence spans 306 residues: Recombination-associated protein RdgC (306 aa).

Belongs to the RdgC family.

The protein resides in the cytoplasm. The protein localises to the nucleoid. May be involved in recombination. This chain is Recombination-associated protein RdgC, found in Pseudomonas entomophila (strain L48).